Reading from the N-terminus, the 1483-residue chain is ABC multidrug transporter atrA (1483 aa).

A compositionally biased stretch (basic and acidic residues) spans 1-19 (MASHKKSEDPLVVKDRQEQ). The interval 1 to 92 (MASHKKSEDP…NDPAVDPQGP (92 aa)) is disordered. The N-linked (GlcNAc...) asparagine glycan is linked to Asn32. Residues 71–82 (PTRTSTLATISE) are compositionally biased toward polar residues. Residues Asn123 and Asn322 are each glycosylated (N-linked (GlcNAc...) asparagine). Positions 147–398 (FRIGEMMKNR…FERQGWECPQ (252 aa)) constitute an ABC transporter 1 domain. Helical transmembrane passes span 512-532 (TVSTVISQIIMALIIGSVFYG), 539-559 (GFTAKGATLFFAVLLNALIAM), 595-615 (IPVKFVIAVVFNLILYFLAGL), 620-640 (GQFFLYLLVTFIVMFVMSAVF), and 654-674 (MGLAGILILALIVYTGFVLPV). Asn718 is a glycosylation site (N-linked (GlcNAc...) asparagine). A helical membrane pass occupies residues 759 to 779 (FGILIAFLVGFMMIYFIATEL). Asn780 carries an N-linked (GlcNAc...) asparagine glycan. Positions 840-1083 (FTWRDVCYDI…LLNYFESNGA (244 aa)) constitute an ABC transporter 2 domain. ATP is bound at residue 876–883 (GVSGAGKT). Residues Asn947 and Asn1146 are each glycosylated (N-linked (GlcNAc...) asparagine). 5 helical membrane passes run 1179-1199 (YIASKWVLGILSGLFIGFSFF), 1215-1235 (LFMLCSIFSSLVQQVMPLFVT), 1254-1274 (AFLIANIIVEIPYQIMMGILT), 1293-1313 (LVLLLCIQFFIYASTFAHMAI), and 1320-1340 (ETASAIVVLLFAMSLTFCGVM). N-linked (GlcNAc...) asparagine glycosylation is present at Asn1413. Residues 1444–1464 (FGLMWVYIVFNIFLATMLYYT) traverse the membrane as a helical segment. Asn1471 is a glycosylation site (N-linked (GlcNAc...) asparagine).

The protein belongs to the ABC transporter superfamily. ABCG family. PDR (TC 3.A.1.205) subfamily.

The protein localises to the cell membrane. It catalyses the reaction (R)-miconazole(in) + ATP + H2O = (R)-miconazole(out) + ADP + phosphate + H(+). Pleiotropic ABC efflux transporter involved in the basal level of azole susceptibility. Confers resistance to miconazole and clotrimazole. The sequence is that of ABC multidrug transporter atrA from Aspergillus oryzae (strain ATCC 42149 / RIB 40) (Yellow koji mold).